Consider the following 596-residue polypeptide: Two-component response regulator ARR12 (596 aa).

Positions Arg-18–Val-133 constitute a Response regulatory domain. Asp-69 carries the post-translational modification 4-aspartylphosphate. Residues Asp-138–Ser-153 show a composition bias toward basic and acidic residues. The tract at residues Asp-138–Ala-192 is disordered. A compositionally biased stretch (polar residues) spans Val-158–Lys-167. Residues Asn-177–Asp-189 show a composition bias toward acidic residues. The Nuclear localization signal signature appears at Lys-194–Arg-197. The myb-like GARP DNA-binding region spans Arg-197–Arg-247. The interval Asn-437–Ser-467 is disordered. The segment covering His-450–Phe-459 has biased composition (polar residues).

Belongs to the ARR family. Type-B subfamily. In terms of assembly, binds the target DNA as a monomer. Two-component system major event consists of a His-to-Asp phosphorelay between a sensor histidine kinase (HK) and a response regulator (RR). In plants, the His-to-Asp phosphorelay involves an additional intermediate named Histidine-containing phosphotransfer protein (HPt). This multistep phosphorelay consists of a His-Asp-His-Asp sequential transfer of a phosphate group between first a His and an Asp of the HK protein, followed by the transfer to a conserved His of the HPt protein and finally the transfer to an Asp in the receiver domain of the RR protein. As to expression, detected in the whole plant. Predominantly expressed in leaves. Expressed at the root transition zone.

It localises to the nucleus. Transcriptional activator that binds specifically to the DNA sequence 5'-[AG]GATT-3'. Functions as a response regulator involved in His-to-Asp phosphorelay signal transduction system. Phosphorylation of the Asp residue in the receiver domain activates the ability of the protein to promote the transcription of target genes. Could directly activate some type-A response regulators in response to cytokinins. Involved in the root-meristem size determination through the regulation of cell differentiation. Involved in activating SHY2 during meristem growth and controls PIN expression via activation of SHY2. This is Two-component response regulator ARR12 (ARR12) from Arabidopsis thaliana (Mouse-ear cress).